A 208-amino-acid polypeptide reads, in one-letter code: Uracil phosphoribosyltransferase (208 aa).

5-phospho-alpha-D-ribose 1-diphosphate is bound by residues arginine 78, arginine 103, and 130 to 138 (DPMFATGGT). Residues isoleucine 193 and 198-200 (GDA) each bind uracil. Aspartate 199 is a binding site for 5-phospho-alpha-D-ribose 1-diphosphate.

It belongs to the UPRTase family. It depends on Mg(2+) as a cofactor.

It carries out the reaction UMP + diphosphate = 5-phospho-alpha-D-ribose 1-diphosphate + uracil. Its pathway is pyrimidine metabolism; UMP biosynthesis via salvage pathway; UMP from uracil: step 1/1. With respect to regulation, allosterically activated by GTP. Its function is as follows. Catalyzes the conversion of uracil and 5-phospho-alpha-D-ribose 1-diphosphate (PRPP) to UMP and diphosphate. The polypeptide is Uracil phosphoribosyltransferase (Campylobacter jejuni subsp. jejuni serotype O:6 (strain 81116 / NCTC 11828)).